The primary structure comprises 39 residues: Cecropin-D-like peptide (39 aa).

As to expression, hemolymph.

The protein resides in the secreted. Its function is as follows. Cecropins have lytic and antibacterial activity against several Gram-positive and Gram-negative bacteria. Has antibacterial activity against the Gram-positive bacteria M.luteus (MIC=34.4 uM), L.monocytogenes (MIC=34.4 uM), and S.lutea (MIC=34.4 uM), and the Gram-negative bacterium E.coli D31 (MIC=8.6 uM). Lacks antibacterial activity against the Gram-positive bacterium B.circulans, and the Gram-negative bacteria E.coli ATCC 25922 and S.typhimurium. Has antifungal activity against A.niger, but lacks antifungal activity against C.albicans, C.wickerhamii, F.oxysporum, P.pastoris, P.tannophilus, S.cerevisiae, T.harzianum, and Z.marxianus. The sequence is that of Cecropin-D-like peptide from Galleria mellonella (Greater wax moth).